We begin with the raw amino-acid sequence, 448 residues long: Selenide, water dikinase 2 (448 aa).

A2 is subject to N-acetylalanine. Position 46 is a phosphoserine (S46). U60 is a catalytic residue. A non-standard amino acid (selenocysteine) is located at residue U60. Residue K63 participates in ATP binding. Residues 85-107 (LGRGLVGGQEEASQEAGLPAGAG) are disordered. S97 carries the post-translational modification Phosphoserine. Residues 118–120 (GMD), D138, D161, and 212–215 (GGQT) each bind ATP. D120 provides a ligand contact to Mg(2+). D161 is a Mg(2+) binding site. D316 is a Mg(2+) binding site.

The protein belongs to the selenophosphate synthase 1 family. Class I subfamily. In terms of assembly, homodimer. It depends on Mg(2+) as a cofactor. Truncated SEPHS2 proteins produced by failed UGA/Sec decoding are ubiquitinated by the CRL2(KLHDC3) complex, which recognizes the glycine (Gly) at the C-terminus of truncated SEPHS2 proteins.

The enzyme catalyses hydrogenselenide + ATP + H2O = selenophosphate + AMP + phosphate + 2 H(+). Functionally, synthesizes selenophosphate from selenide and ATP. The polypeptide is Selenide, water dikinase 2 (SEPHS2) (Homo sapiens (Human)).